Reading from the N-terminus, the 43-residue chain is uncharacterized protein (43 aa).

This is an uncharacterized protein from Saccharomyces cerevisiae (strain ATCC 204508 / S288c) (Baker's yeast).